A 208-amino-acid chain; its full sequence is Platelet glycoprotein Ib beta chain (208 aa).

A signal peptide spans Met-1–Cys-26. 2 disulfide bridges follow: Cys-26-Cys-32 and Cys-30-Cys-39. The LRRNT domain maps to Pro-27 to Val-55. Residues Pro-27–Cys-147 are Extracellular-facing. The LRR repeat unit spans residues Leu-60–Thr-83. Asn-66 carries N-linked (GlcNAc...) asparagine glycosylation. An LRRCT domain is found at Asn-89–Pro-143. 2 cysteine pairs are disulfide-bonded: Cys-93/Cys-118 and Cys-95/Cys-141. Residues Trp-148–Leu-172 traverse the membrane as a helical segment. Topologically, residues Cys-173–Ser-208 are cytoplasmic. Residue Ser-193 is modified to Phosphoserine; by PKA. A Phosphothreonine modification is found at Thr-195.

In terms of assembly, two GP-Ib beta are disulfide-linked to one GP-Ib alpha. GP-IX is complexed with the GP-Ib heterodimer via a non covalent linkage. Interacts with TRAF4.

Its subcellular location is the membrane. Functionally, gp-Ib, a surface membrane protein of platelets, participates in the formation of platelet plugs by binding to von Willebrand factor, which is already bound to the subendothelium. This chain is Platelet glycoprotein Ib beta chain (GP1BB), found in Papio cynocephalus (Yellow baboon).